Here is a 390-residue protein sequence, read N- to C-terminus: RNA polymerase sigma factor SigA (390 aa).

Residues 48–57 (FLEPQTDEDD) are compositionally biased toward acidic residues. The segment at 48 to 75 (FLEPQTDEDDAKSGKAAKSRRRTQSKKK) is disordered. Over residues 62-75 (KAAKSRRRTQSKKK) the composition is skewed to basic residues. The tract at residues 158–228 (MVQSNLRLVV…TRAIADQSRT (71 aa)) is sigma-70 factor domain-2. The Interaction with polymerase core subunit RpoC motif lies at 182 to 185 (DLIQ). Positions 237-312 (ETISRIKKTT…ESDGETPEDQ (76 aa)) are sigma-70 factor domain-3. The sigma-70 factor domain-4 stretch occupies residues 325–378 (VLDSLSPRERDVLRLRYGLDDGRMKTLEEIGQIFNVTRERIRQIEAKALRKLRH). A DNA-binding region (H-T-H motif) is located at residues 351–370 (LEEIGQIFNVTRERIRQIEA).

Belongs to the sigma-70 factor family. RpoD/SigA subfamily. As to quaternary structure, interacts transiently with the RNA polymerase catalytic core.

The protein resides in the cytoplasm. Its function is as follows. Sigma factors are initiation factors that promote the attachment of RNA polymerase to specific initiation sites and are then released. This sigma factor is the primary sigma factor during exponential growth. The sequence is that of RNA polymerase sigma factor SigA from Nostoc sp. (strain PCC 7120 / SAG 25.82 / UTEX 2576).